The primary structure comprises 285 residues: Homeobox protein Hox-A13b (285 aa).

The homeobox DNA-binding region spans 219 to 278 (GRKKRVPYTKVQLKELEREYAANKFITKDKRRRISAQTNLTERQVTIWFQNRRVKEKKVV).

This sequence belongs to the Abd-B homeobox family.

It is found in the nucleus. Sequence-specific transcription factor which is part of a developmental regulatory system that provides cells with specific positional identities on the anterior-posterior axis. The protein is Homeobox protein Hox-A13b (hoxa13b) of Takifugu rubripes (Japanese pufferfish).